A 155-amino-acid polypeptide reads, in one-letter code: 6,7-dimethyl-8-ribityllumazine synthase (155 aa).

Residues Phe23, 57–59, and 81–83 each bind 5-amino-6-(D-ribitylamino)uracil; these read AFE and AVI. (2S)-2-hydroxy-3-oxobutyl phosphate is bound at residue 86-87; sequence ST. His89 acts as the Proton donor in catalysis. Phe114 contacts 5-amino-6-(D-ribitylamino)uracil. Arg128 is a binding site for (2S)-2-hydroxy-3-oxobutyl phosphate.

Belongs to the DMRL synthase family.

It carries out the reaction (2S)-2-hydroxy-3-oxobutyl phosphate + 5-amino-6-(D-ribitylamino)uracil = 6,7-dimethyl-8-(1-D-ribityl)lumazine + phosphate + 2 H2O + H(+). It participates in cofactor biosynthesis; riboflavin biosynthesis; riboflavin from 2-hydroxy-3-oxobutyl phosphate and 5-amino-6-(D-ribitylamino)uracil: step 1/2. Catalyzes the formation of 6,7-dimethyl-8-ribityllumazine by condensation of 5-amino-6-(D-ribitylamino)uracil with 3,4-dihydroxy-2-butanone 4-phosphate. This is the penultimate step in the biosynthesis of riboflavin. This chain is 6,7-dimethyl-8-ribityllumazine synthase, found in Geobacter sulfurreducens (strain ATCC 51573 / DSM 12127 / PCA).